The primary structure comprises 281 residues: 2-dehydro-3-deoxyphosphooctonate aldolase (281 aa).

It belongs to the KdsA family.

It is found in the cytoplasm. It catalyses the reaction D-arabinose 5-phosphate + phosphoenolpyruvate + H2O = 3-deoxy-alpha-D-manno-2-octulosonate-8-phosphate + phosphate. Its pathway is carbohydrate biosynthesis; 3-deoxy-D-manno-octulosonate biosynthesis; 3-deoxy-D-manno-octulosonate from D-ribulose 5-phosphate: step 2/3. It functions in the pathway bacterial outer membrane biogenesis; lipopolysaccharide biosynthesis. The sequence is that of 2-dehydro-3-deoxyphosphooctonate aldolase from Pseudomonas aeruginosa (strain UCBPP-PA14).